The sequence spans 340 residues: Diacylglycerol acyltransferase/mycolyltransferase Ag85C (340 aa).

The signal sequence occupies residues M1–G45. Residue L86–R87 coordinates substrate. A fibronectin-binding region spans residues F102–V112. Positions 170 and 198 each coordinate substrate. S170 (nucleophile) is an active-site residue. The active site involves E274. Residues L276–R279 and H306–W308 contribute to the substrate site. H306 is an active-site residue.

This sequence belongs to the mycobacterial A85 antigen family. In terms of assembly, homodimer.

It is found in the secreted. The enzyme catalyses an acyl-CoA + a 1,2-diacyl-sn-glycerol = a triacyl-sn-glycerol + CoA. It catalyses the reaction 2 alpha,alpha'-trehalose 6-mycolate = alpha,alpha'-trehalose 6,6'-bismycolate + alpha,alpha-trehalose. Its function is as follows. The antigen 85 proteins (FbpA, FbpB, FbpC) are responsible for the high affinity of mycobacteria to fibronectin, a large adhesive glycoprotein, which facilitates the attachment of M.tuberculosis to murine alveolar macrophages (AMs). They also help to maintain the integrity of the cell wall by catalyzing the transfer of mycolic acids to cell wall arabinogalactan and through the synthesis of alpha,alpha-trehalose dimycolate (TDM, cord factor). They catalyze the transfer of a mycoloyl residue from one molecule of alpha,alpha-trehalose monomycolate (TMM) to another TMM, leading to the formation of TDM. The polypeptide is Diacylglycerol acyltransferase/mycolyltransferase Ag85C (fbpC) (Mycobacterium bovis (strain ATCC BAA-935 / AF2122/97)).